The primary structure comprises 172 residues: Ribosome maturation factor RimM (172 aa).

A PRC barrel domain is found at 95-168 (QEGEFYYHQI…CVDVELMEGL (74 aa)).

It belongs to the RimM family. Binds ribosomal protein uS19.

Its subcellular location is the cytoplasm. An accessory protein needed during the final step in the assembly of 30S ribosomal subunit, possibly for assembly of the head region. Essential for efficient processing of 16S rRNA. May be needed both before and after RbfA during the maturation of 16S rRNA. It has affinity for free ribosomal 30S subunits but not for 70S ribosomes. This chain is Ribosome maturation factor RimM, found in Streptococcus pyogenes serotype M49 (strain NZ131).